The primary structure comprises 498 residues: Flavin-dependent halogenase otaD (498 aa).

Positions 14, 17, and 47 each coordinate FAD. Chloride-binding residues include S326 and G327. Residue V328 coordinates FAD.

Belongs to the flavin-dependent halogenase family.

It carries out the reaction ochratoxin B + FADH2 + chloride + O2 = ochratoxin A + FAD + 2 H2O. Its pathway is mycotoxin biosynthesis. In terms of biological role, flavin-dependent halogenase; part of the gene cluster that mediates the biosynthesis of ochratoxin A (OTA), a mycotoxin composed of a chlorinated type I polyketide dihydroisocoumarin moiety linked to L-phenylalanine, and demonstrated to have nephrotoxic, immunotoxic, genotoxic, neurotoxic, and teratogenic properties. OtaD chlorinates ochratoxin B (OTB) at the C-5 position to form OTA. The pathway begins with the highly reducing polyketide synthase otaA that catalyzes the formation of the isocoumarin group during the initial stages of biosynthesis, starting from one acetate and 4 malonate units, to originate the characteristic pentaketide skeleton 7-methylmellein (7-MM) of the OTA molecule. The newly identified cyclase otaY might be involved in the polyketide cyclization reaction during the initial steps of the OTA biosynthesis. 7-MM is then oxidized into 7-carboxymellein (also called ochratoxin beta) by the cytochrome P450 monooxygenase otaC. The NRPS encoded by the otaB gene is involved in the linking of phenylalanine to the dihydroisocoumarin ring. The reaction catalyzed by NRPS results in the production of ochratoxin B (OTB), which is the non-chlorinated analog of OTA and which subsequently serves as the substrate of the halogenase otaD for chlorination activity to form the final molecular structure of OTA, containing a chlorine atom in the C-5 position of the molecule. This chain is Flavin-dependent halogenase otaD, found in Aspergillus carbonarius (strain ITEM 5010).